The chain runs to 420 residues: Serine hydroxymethyltransferase (420 aa).

Residues Leu121 and 125-127 contribute to the (6S)-5,6,7,8-tetrahydrofolate site; that span reads GHL. Lys230 is modified (N6-(pyridoxal phosphate)lysine). Position 355-357 (355-357) interacts with (6S)-5,6,7,8-tetrahydrofolate; the sequence is SPF.

The protein belongs to the SHMT family. As to quaternary structure, homodimer. It depends on pyridoxal 5'-phosphate as a cofactor.

It localises to the cytoplasm. It catalyses the reaction (6R)-5,10-methylene-5,6,7,8-tetrahydrofolate + glycine + H2O = (6S)-5,6,7,8-tetrahydrofolate + L-serine. It functions in the pathway one-carbon metabolism; tetrahydrofolate interconversion. It participates in amino-acid biosynthesis; glycine biosynthesis; glycine from L-serine: step 1/1. Catalyzes the reversible interconversion of serine and glycine with tetrahydrofolate (THF) serving as the one-carbon carrier. This reaction serves as the major source of one-carbon groups required for the biosynthesis of purines, thymidylate, methionine, and other important biomolecules. Also exhibits THF-independent aldolase activity toward beta-hydroxyamino acids, producing glycine and aldehydes, via a retro-aldol mechanism. The polypeptide is Serine hydroxymethyltransferase (Streptococcus mutans serotype c (strain ATCC 700610 / UA159)).